The following is an 814-amino-acid chain: MKEFPKHYNFIENEKKWQHIWQELQIYAYNPNMSKEGIYIVDTPPPTVSGQLHIGHIYSYTQTDFIVRFQRMIGKNIFYPIGFDDNGLPTERLVEKQKQIKAYNMERDEFIKICQEVVQNEEAKFRNLFKQIALSVDWSLEYQTISPLSRKISQMSFLDLLHKGEVYRANQPILWDTVDGTALAQADIEDKQKISSMNYIMFKTEQGDKLTIATTRPELLPACVAVFYHPDDGRYKHLADKSAITPLFNEKVPILADPLVQQDKGTGLVMCCTFGDQTDITWWKSHNLPLKTIITKKGTINFPHKIDLDGLTIKEARTKIIDILKEQNLLTKQEEITQTVKCAERSGAPLEILTVTQWFIKTITHKEALLKRTNELNWYPKNMQMRLENWINSLSWDWCISRQRYFGVPFPIWYSKRIGEEGKILYADISQLPVDPLKDLPIGYSKEEVDPDLDVMDTWATSSVSPQLSTYGISEDFAINKVRHDKLFPMDLRPQAHEIIRTWAFYTILKSHLHQNILPWKNIMVSGWCLAEDRSKMSKSKGNVLVPEKLLERYGADVIRYWSANSKLGADTAYSEDIMKNGKRLVNKLWNAAKFVSIHFDKLTSEDKKVSLCAIKEKITHEFDQWIINKLVALVKLATNALQNYEYANAIYLTEKFFWSIFCDNYLEISKTRSYDEGNKNPQGQYSSILTSYHVMQTLLKLFAPFMPHITEELYQILYSKNSIHIQGNWVNYGDLNYDIDVQGPEGLLTILDIVRKFKAEYNLSIKAPIKLLEVSGIILSTELVEDLKNVTSAEAIQFEMKDDKIKVNIKLFV.

The 'HIGH' region motif lies at 46–56; sequence PTVSGQLHIGH. The short motif at 536 to 540 is the 'KMSKS' region element; that stretch reads KMSKS. Residue lysine 539 coordinates ATP.

Belongs to the class-I aminoacyl-tRNA synthetase family. ValS type 2 subfamily. In terms of assembly, monomer.

It is found in the cytoplasm. It catalyses the reaction tRNA(Val) + L-valine + ATP = L-valyl-tRNA(Val) + AMP + diphosphate. Its function is as follows. Catalyzes the attachment of valine to tRNA(Val). As ValRS can inadvertently accommodate and process structurally similar amino acids such as threonine, to avoid such errors, it has a 'posttransfer' editing activity that hydrolyzes mischarged Thr-tRNA(Val) in a tRNA-dependent manner. The polypeptide is Valine--tRNA ligase (Rickettsia typhi (strain ATCC VR-144 / Wilmington)).